The primary structure comprises 242 residues: Ubiquinone biosynthesis O-methyltransferase (242 aa).

S-adenosyl-L-methionine-binding residues include R44, G64, D85, and M129.

It belongs to the methyltransferase superfamily. UbiG/COQ3 family.

The enzyme catalyses a 3-demethylubiquinol + S-adenosyl-L-methionine = a ubiquinol + S-adenosyl-L-homocysteine + H(+). The catalysed reaction is a 3-(all-trans-polyprenyl)benzene-1,2-diol + S-adenosyl-L-methionine = a 2-methoxy-6-(all-trans-polyprenyl)phenol + S-adenosyl-L-homocysteine + H(+). It functions in the pathway cofactor biosynthesis; ubiquinone biosynthesis. Its function is as follows. O-methyltransferase that catalyzes the 2 O-methylation steps in the ubiquinone biosynthetic pathway. This is Ubiquinone biosynthesis O-methyltransferase from Salmonella arizonae (strain ATCC BAA-731 / CDC346-86 / RSK2980).